The following is a 405-amino-acid chain: MKVLVLNAGSSSQKSCLYDLPHTQLPQEPPQPLWEAQIDWPHGGDGAKLKIKTVHHRHEKTLQGGSRSEDSARMLETLYSGETRVIADPSEIEMVGHRVVHGGEAYRESTRITPEVKAAIDQLARFAPVHNPANLAGIEALEALLGPQVPQIAVFDTAFHSRLPAAAYVYPGPYEWLDQGIRRYGFHGISHRYCAERAAQILGRDLAQLRLITCHLGNGCSLAAVQGGFSIDTTMGFTPLEGLMMGSRSGSVDPGILIHLMRQADYTVDKLDHILNQASGLEGVSGISNDLRPLFKAIDEGNARAKLALDIYIHRLRAGIGAMAVSLGGLDALIFTAGVGENAAPVRAGACEALGFLGVALDPQKNNGRPRDADIAAADSAVRVLVIHTQEDWAIARECWQHLRR.

N7 contacts Mg(2+). K14 contributes to the ATP binding site. A substrate-binding site is contributed by R98. The active-site Proton donor/acceptor is D156. Residues 215 to 219, 290 to 292, and 338 to 342 each bind ATP; these read HLGNG, DLR, and GVGEN. E391 is a Mg(2+) binding site.

This sequence belongs to the acetokinase family. In terms of assembly, homodimer. Mg(2+) serves as cofactor. The cofactor is Mn(2+).

It localises to the cytoplasm. It catalyses the reaction acetate + ATP = acetyl phosphate + ADP. The protein operates within metabolic intermediate biosynthesis; acetyl-CoA biosynthesis; acetyl-CoA from acetate: step 1/2. Its function is as follows. Catalyzes the formation of acetyl phosphate from acetate and ATP. Can also catalyze the reverse reaction. The sequence is that of Acetate kinase from Gloeobacter violaceus (strain ATCC 29082 / PCC 7421).